Reading from the N-terminus, the 370-residue chain is 3-dehydroquinate synthase (370 aa).

NAD(+)-binding positions include 107-111 (GVIGD), 131-132 (TS), Lys-144, and Lys-153. Zn(2+) is bound by residues Glu-186, His-249, and His-267.

It belongs to the sugar phosphate cyclases superfamily. Dehydroquinate synthase family. Requires Co(2+) as cofactor. The cofactor is Zn(2+). It depends on NAD(+) as a cofactor.

It localises to the cytoplasm. The enzyme catalyses 7-phospho-2-dehydro-3-deoxy-D-arabino-heptonate = 3-dehydroquinate + phosphate. Its pathway is metabolic intermediate biosynthesis; chorismate biosynthesis; chorismate from D-erythrose 4-phosphate and phosphoenolpyruvate: step 2/7. Its function is as follows. Catalyzes the conversion of 3-deoxy-D-arabino-heptulosonate 7-phosphate (DAHP) to dehydroquinate (DHQ). The protein is 3-dehydroquinate synthase of Jannaschia sp. (strain CCS1).